A 383-amino-acid chain; its full sequence is L-lactate dehydrogenase (383 aa).

Positions 1–380 constitute an FMN hydroxy acid dehydrogenase domain; the sequence is MIIASTFDYR…TCESLVNTDA (380 aa). Tyr24 lines the substrate pocket. FMN is bound by residues Ser106 and Gln127. Tyr129 contacts substrate. Thr155 contacts FMN. Position 164 (Arg164) interacts with substrate. Lys251 is a binding site for FMN. His275 (proton acceptor) is an active-site residue. Substrate is bound at residue Arg278. FMN is bound at residue 306 to 330; it reads DSGVRSGLDVVRMIAQGADAVMIGR.

It belongs to the FMN-dependent alpha-hydroxy acid dehydrogenase family. It depends on FMN as a cofactor.

It is found in the cell inner membrane. It catalyses the reaction (S)-lactate + A = pyruvate + AH2. Functionally, catalyzes the conversion of L-lactate to pyruvate. Is coupled to the respiratory chain. The protein is L-lactate dehydrogenase of Bartonella tribocorum (strain CIP 105476 / IBS 506).